We begin with the raw amino-acid sequence, 210 residues long: Guanylate kinase (210 aa).

The Guanylate kinase-like domain maps to 6-186 (GLLGIISAPS…ALIYLQSVIL (181 aa)). 13 to 20 (APSGAGKS) contributes to the ATP binding site.

Belongs to the guanylate kinase family.

The protein localises to the cytoplasm. The catalysed reaction is GMP + ATP = GDP + ADP. Its function is as follows. Essential for recycling GMP and indirectly, cGMP. This is Guanylate kinase from Blochmanniella floridana.